Consider the following 184-residue polypeptide: UPF0397 protein SAS2570 (184 aa).

5 helical membrane passes run 11–31 (VVAI…VVIP), 44–64 (AFLA…TGLV), 77–97 (AWWS…WIGL), 111–131 (MIYF…LIAP), and 148–168 (QGVI…TILL).

It belongs to the UPF0397 family.

It localises to the cell membrane. The sequence is that of UPF0397 protein SAS2570 from Staphylococcus aureus (strain MSSA476).